A 481-amino-acid chain; its full sequence is Glutamyl-tRNA(Gln) amidotransferase subunit A (481 aa).

Active-site charge relay system residues include K76 and S151. The active-site Acyl-ester intermediate is S175.

This sequence belongs to the amidase family. GatA subfamily. In terms of assembly, heterotrimer of A, B and C subunits.

The catalysed reaction is L-glutamyl-tRNA(Gln) + L-glutamine + ATP + H2O = L-glutaminyl-tRNA(Gln) + L-glutamate + ADP + phosphate + H(+). Functionally, allows the formation of correctly charged Gln-tRNA(Gln) through the transamidation of misacylated Glu-tRNA(Gln) in organisms which lack glutaminyl-tRNA synthetase. The reaction takes place in the presence of glutamine and ATP through an activated gamma-phospho-Glu-tRNA(Gln). The protein is Glutamyl-tRNA(Gln) amidotransferase subunit A of Neisseria meningitidis serogroup C (strain 053442).